A 412-amino-acid polypeptide reads, in one-letter code: Zinc finger protein 821 (412 aa).

The disordered stretch occupies residues 26-83; sequence RQAMMKTDFPGDLGSQRQAIQQLRDQDSSSSDSEGDEEETTQDEVSSHTSEEDGGVVK. The span at 58–67 shows a compositional bias: acidic residues; the sequence is SEGDEEETTQ. 2 C2H2-type zinc fingers span residues 116 to 140 and 150 to 172; these read ELCQCPLCQLDCGSREQLIAHVYQH and YMCPVCGRALSSPGSLGRHLLIH. Positions 257 to 366 form a coiled coil; it reads KWALRRQNEP…EKMDMMLRAQ (110 aa). A disordered region spans residues 278 to 319; that stretch reads RTAKKSRRDNETPEEREVRRMRDREAKRLQRMQETDEQRARR.

This sequence belongs to the krueppel C2H2-type zinc-finger protein family.

The protein localises to the nucleus. Functionally, may be involved in transcriptional regulation. The chain is Zinc finger protein 821 (ZNF821) from Homo sapiens (Human).